The chain runs to 1244 residues: MLIKEYHILLPMSLDEYQVAQLYMIQKKSREESSGEGSGVEILANRPYTDGPGGSGQYTHKVYHVGSHIPGWFRALLPKAALQVEEESWNAYPYTRTRYTCPFVEKFSIEIETYYLPDGGQQPNVFNLSGAERRQRILDTIDIVRDAVAPGEYKAEEDPRLYHSVKTGRGPLSDDWARTAAQTGPLMCAYKLCKVEFRYWGMQAKIEQFIHDVGLRRVMLRAHRQAWCWQDEWTELSMADIRALEEETARMLAQRMAKCNTGSEGSEAQPPGKPSTEARSAASNTGTPDGPEAPPGPDASPDASFGKQWSSSSRSSYSSQHGGAVSPQSLSEWRMQNIARDSENSSEEEFFDAHEGFSDSEEVFPKEMTKWNSNDFIDAFASPVEAEGTPEPGAEAAKGIEDGAQAPRDSEGLDGAGELGAEACAVHALFLILHSGNILDSGPGDANSKQADVQTLSSAFEAVTRIHFPEALGHVALRLVPCPPICAAAYALVSNLSPYSHDGDSLSRSQDHIPLAALPLLATSSSRYQGAVATVIARTNQAYSAFLRSPEGAGFCGQVALIGDGVGGILGFDALCHSANAGTGSRGSSRRGSMNNELLSPEFGPVRDPLADGVEGLGRGSPEPSALPPQRIPSDMASPEPEGSQNSLQAAPATTSSWEPRRASTAFCPPAASSEAPDGPSSTARLDFKVSGFFLFGSPLGLVLALRKTVMPALEAAQMRPACEQIYNLFHAADPCASRLEPLLAPKFQAIAPLTVPRYQKFPLGDGSSLLLADTLQTHSSLFLEELEMLVPSTPTSTSGAFWKGSELATDPPAQPAAPSTTSEVVKILERWWGTKRIDYSLYCPEALTAFPTVTLPHLFHASYWESADVVAFILRQVIEKERPQLAECEEPSIYSPAFPREKWQRKRTQVKIRNVTSNHRASDTVVCEGRPQVLSGRFMYGPLDVVTLTGEKVDVYIMTQPLSGKWIHFGTEVTNSSGRLTFPVPPERALGIGVYPVRMVVRGDHTYAECCLTVVARGTEAVVFSIDGSFTASVSIMGSDPKVRAGAVDVVRHWQDSGYLIVYVTGRPDMQKHRVVAWLSQHNFPHGVVSFCDGLTHDPLRQKAMFLQSLVQEVELNIVAGYGSPKDVAVYAALGLSPSQTYIVGRAVRKLQAQCQFLSDGYVAHLGQLEAGSHSHASSGPPRAALGKSSYGVAAPVDFLRKQSQLLRSRGPSQAEREGPGTPPTTLARGKARSISLKLDSEE.

A Phosphothreonine modification is found at Thr59. Disordered regions lie at residues 258 to 331 and 339 to 358; these read KCNT…QSLS and ARDS…EGFS. Thr287 is subject to Phosphothreonine; by CDK1. Positions 299–319 are enriched in low complexity; the sequence is ASPDASFGKQWSSSSRSSYSS. Phosphoserine occurs at positions 300, 304, 319, 326, 329, 342, 345, 346, and 373. Phosphoserine; by CDK1 is present on Ser382. Residues 581 to 682 form a disordered region; the sequence is AGTGSRGSSR…SSEAPDGPSS (102 aa). Ser593, Ser600, and Ser621 each carry phosphoserine. Residues 643-658 are compositionally biased toward polar residues; it reads GSQNSLQAAPATTSSW. One can recognise a DDHD domain in the interval 686-880; the sequence is LDFKVSGFFL…VAFILRQVIE (195 aa). Ser896 carries the phosphoserine modification. The segment at 1206 to 1244 is disordered; it reads QLLRSRGPSQAEREGPGTPPTTLARGKARSISLKLDSEE. An omega-N-methylarginine mark is found at Arg1211 and Arg1218. Ser1237 is subject to Phosphoserine.

The protein belongs to the PtdIns transfer protein family. PI transfer class IIA subfamily. In terms of assembly, interacts with PIK4CA. Interacts with PTK2B via its C-terminus. Interacts with RHOA. Has higher affinity for the inactive, GDP-bound form of RHOA. The CDK1-phosphorylated form interacts with PLK1. Interacts with VAPB. Phosphorylated on multiple sites by CDK1 at the onset of mitosis. Phosphorylation facilitates dissociation from the Golgi complex and is required for interaction with PLK1. In terms of processing, phosphorylated on threonine residues upon treatment with oleic acid. Post-translationally, phosphorylated on tyrosine residues by PTK2B. In terms of tissue distribution, ubiquitous.

Its subcellular location is the cytoplasm. The protein localises to the golgi apparatus. It is found in the golgi stack membrane. It localises to the endoplasmic reticulum membrane. The protein resides in the lipid droplet. Its subcellular location is the cleavage furrow. The protein localises to the midbody. It carries out the reaction a 1,2-diacyl-sn-glycero-3-phospho-(1D-myo-inositol)(in) = a 1,2-diacyl-sn-glycero-3-phospho-(1D-myo-inositol)(out). Its function is as follows. Catalyzes the transfer of phosphatidylinositol (PI) between membranes. Binds PI, phosphatidylcholine (PC) and phosphatidic acid (PA) with the binding affinity order of PI &gt; PA &gt; PC. Regulates RHOA activity, and plays a role in cytoskeleton remodeling. Necessary for normal completion of cytokinesis. Plays a role in maintaining normal diacylglycerol levels in the Golgi apparatus. Necessary for maintaining the normal structure of the endoplasmic reticulum and the Golgi apparatus. Required for protein export from the endoplasmic reticulum and the Golgi. Binds calcium ions. This Homo sapiens (Human) protein is Membrane-associated phosphatidylinositol transfer protein 1 (PITPNM1).